A 310-amino-acid chain; its full sequence is Tagatose-6-phosphate kinase (310 aa).

The protein belongs to the carbohydrate kinase PfkB family. LacC subfamily.

It carries out the reaction D-tagatofuranose 6-phosphate + ATP = D-tagatofuranose 1,6-bisphosphate + ADP + H(+). It participates in carbohydrate metabolism; D-tagatose 6-phosphate degradation; D-glyceraldehyde 3-phosphate and glycerone phosphate from D-tagatose 6-phosphate: step 1/2. The polypeptide is Tagatose-6-phosphate kinase (Streptococcus agalactiae serotype Ia (strain ATCC 27591 / A909 / CDC SS700)).